A 1400-amino-acid polypeptide reads, in one-letter code: DNA-directed RNA polymerase subunit beta' (1400 aa).

Residues Cys-71, Cys-73, Cys-86, and Cys-89 each contribute to the Zn(2+) site. Residues Asp-462, Asp-464, and Asp-466 each coordinate Mg(2+). Zn(2+)-binding residues include Cys-811, Cys-885, Cys-892, and Cys-895.

The protein belongs to the RNA polymerase beta' chain family. The RNAP catalytic core consists of 2 alpha, 1 beta, 1 beta' and 1 omega subunit. When a sigma factor is associated with the core the holoenzyme is formed, which can initiate transcription. Mg(2+) is required as a cofactor. Requires Zn(2+) as cofactor.

It catalyses the reaction RNA(n) + a ribonucleoside 5'-triphosphate = RNA(n+1) + diphosphate. In terms of biological role, DNA-dependent RNA polymerase catalyzes the transcription of DNA into RNA using the four ribonucleoside triphosphates as substrates. This is DNA-directed RNA polymerase subunit beta' from Brucella canis (strain ATCC 23365 / NCTC 10854 / RM-666).